A 212-amino-acid chain; its full sequence is 3,4-dihydroxy-2-butanone 4-phosphate synthase (212 aa).

Residues 37-38, D42, 150-154, and E174 each bind D-ribulose 5-phosphate; these read RE and RRGHT. E38 contacts Mg(2+). H153 lines the Mg(2+) pocket.

Belongs to the DHBP synthase family. As to quaternary structure, homodimer. Requires Mg(2+) as cofactor. It depends on Mn(2+) as a cofactor.

The catalysed reaction is D-ribulose 5-phosphate = (2S)-2-hydroxy-3-oxobutyl phosphate + formate + H(+). It participates in cofactor biosynthesis; riboflavin biosynthesis; 2-hydroxy-3-oxobutyl phosphate from D-ribulose 5-phosphate: step 1/1. Its function is as follows. Catalyzes the conversion of D-ribulose 5-phosphate to formate and 3,4-dihydroxy-2-butanone 4-phosphate. This is 3,4-dihydroxy-2-butanone 4-phosphate synthase from Histophilus somni (strain 129Pt) (Haemophilus somnus).